Reading from the N-terminus, the 211-residue chain is Protoglabretal synthase MOI1 (211 aa).

Helical transmembrane passes span 16–36 (ASLH…TWII), 50–70 (LICW…YYVF), 104–124 (VLGI…LAAY), 135–155 (IFQF…FLTA), and 179–199 (IWVI…HAIC). Positions 46–188 (IERLLICWWA…IWVIVPMLIA (143 aa)) constitute an EXPERA domain.

This sequence belongs to the EBP family. As to expression, expressed in maturing fruits and in juice vesicles.

It localises to the membrane. It catalyses the reaction 7,8-epoxymelianol = protoglabretal. It participates in secondary metabolite biosynthesis; terpenoid biosynthesis. In terms of biological role, isomerase involved in the biosynthesis of glabretanes triterpene natural products such as glabretal, a component with in vitro antiproliferative properties on lymphocytes. Catalyzes the conversion of 7,8-epoxymelianol to protoglabretal via skeletal rearrangements. This chain is Protoglabretal synthase MOI1, found in Citrus sinensis (Sweet orange).